Here is a 184-residue protein sequence, read N- to C-terminus: Oligoribonuclease (184 aa).

The Exonuclease domain maps to 7–170 (LIWIDLEMTG…DDIRESVAEL (164 aa)). Y128 is a catalytic residue.

This sequence belongs to the oligoribonuclease family.

Its subcellular location is the cytoplasm. In terms of biological role, 3'-to-5' exoribonuclease specific for small oligoribonucleotides. The protein is Oligoribonuclease of Baumannia cicadellinicola subsp. Homalodisca coagulata.